The primary structure comprises 141 residues: VLSPADKTNVKAAWGKVGGHAGEYGAEALERMFLSFPTTKTYFPHFDLSHGSAQVKGHGKKVADALTLAVDHVDDMPQALSALSDLHAHKLRVDPVNFKLLSHCLLVTLAAHLPAEFTPAVHASLDKFLASVGTVLTSKYR.

A Globin domain is found at 1–141 (VLSPADKTNV…VGTVLTSKYR (141 aa)). Residue serine 3 is modified to Phosphoserine. Lysine 7 carries the N6-succinyllysine modification. Threonine 8 carries the phosphothreonine modification. N6-succinyllysine is present on lysine 11. Residue lysine 16 is modified to N6-acetyllysine; alternate. N6-succinyllysine; alternate is present on lysine 16. Phosphotyrosine is present on tyrosine 24. The residue at position 35 (serine 35) is a Phosphoserine. Lysine 40 carries the N6-succinyllysine modification. Serine 49 is modified (phosphoserine). Histidine 58 is a binding site for O2. Position 87 (histidine 87) interacts with heme b. Serine 102 bears the Phosphoserine mark. At threonine 108 the chain carries Phosphothreonine. Serine 124 and serine 131 each carry phosphoserine. 2 positions are modified to phosphothreonine: threonine 134 and threonine 137. Residue serine 138 is modified to Phosphoserine.

The protein belongs to the globin family. In terms of assembly, heterotetramer of two alpha chains and two beta chains. In terms of tissue distribution, red blood cells.

Functionally, involved in oxygen transport from the lung to the various peripheral tissues. This is Hemoglobin subunit alpha-1/2/3 from Macaca nemestrina (Pig-tailed macaque).